Consider the following 273-residue polypeptide: Beta-lactamase OXA-23 (273 aa).

Residues 1–17 (MNKYFTCYVVASLFLSG) form the signal peptide. Ser79 functions as the Acyl-ester intermediate in the catalytic mechanism. A beta-lactam-binding residues include Ser79, Lys82, Ser126, Thr217, Trp219, and Arg259. Lys82 is subject to N6-carboxylysine.

It belongs to the class-D beta-lactamase family. In terms of assembly, monomer. Carboxylated on the epsilon-amino group of a lysine, with the resulting carbamate functional group serving as a general base. Probably N-carboxylated at Lys-82 at neutral pH in vivo and undergoes complete N-decarboxylation, at pH 4.1, in vitro.

Its subcellular location is the periplasm. The enzyme catalyses a beta-lactam + H2O = a substituted beta-amino acid. Inhibited by the desmethyl carbapenem, MA-1-206, via a covalent binding to Ser-79. Its function is as follows. Class D beta-lactamase which confers resistance to the beta-lactam antibiotics, including ampicillin, and carbapenems such as imipenem and meropenem. Acts via hydrolysis of the beta-lactam ring. Has penicillin-, cephalosporin- and carbapenem-hydrolyzing activities, but lacks ceftazidime-hydrolyzing activity. This is Beta-lactamase OXA-23 from Acinetobacter baumannii.